A 67-amino-acid polypeptide reads, in one-letter code: MTDLEELKQRVQKLQSRAATAKTQLHDLAECLPNYWTEIVAVAEKTFDAFAQLDAAKRELAASENSR.

It belongs to the UPF0437 family.

The chain is UPF0437 protein y4xE from Sinorhizobium fredii (strain NBRC 101917 / NGR234).